Here is a 476-residue protein sequence, read N- to C-terminus: Aspartyl/glutamyl-tRNA(Asn/Gln) amidotransferase subunit B (476 aa).

This sequence belongs to the GatB/GatE family. GatB subfamily. In terms of assembly, heterotrimer of A, B and C subunits.

The enzyme catalyses L-glutamyl-tRNA(Gln) + L-glutamine + ATP + H2O = L-glutaminyl-tRNA(Gln) + L-glutamate + ADP + phosphate + H(+). It catalyses the reaction L-aspartyl-tRNA(Asn) + L-glutamine + ATP + H2O = L-asparaginyl-tRNA(Asn) + L-glutamate + ADP + phosphate + 2 H(+). Its function is as follows. Allows the formation of correctly charged Asn-tRNA(Asn) or Gln-tRNA(Gln) through the transamidation of misacylated Asp-tRNA(Asn) or Glu-tRNA(Gln) in organisms which lack either or both of asparaginyl-tRNA or glutaminyl-tRNA synthetases. The reaction takes place in the presence of glutamine and ATP through an activated phospho-Asp-tRNA(Asn) or phospho-Glu-tRNA(Gln). In Clostridium botulinum (strain 657 / Type Ba4), this protein is Aspartyl/glutamyl-tRNA(Asn/Gln) amidotransferase subunit B.